Here is a 335-residue protein sequence, read N- to C-terminus: GTPase Obg (335 aa).

One can recognise an Obg domain in the interval 1–158 (MFVDQITLEL…RLVELELKLI (158 aa)). The 176-residue stretch at 159 to 334 (ADIGLVGFPN…LHDLFKSKLS (176 aa)) folds into the OBG-type G domain. GTP-binding positions include 165-172 (GFPNAGKS), 190-194 (FTTLH), 215-218 (DIPG), 285-288 (NKID), and 315-317 (SGL). Mg(2+)-binding residues include S172 and T192.

This sequence belongs to the TRAFAC class OBG-HflX-like GTPase superfamily. OBG GTPase family. As to quaternary structure, monomer. The cofactor is Mg(2+).

Its subcellular location is the cytoplasm. Its function is as follows. An essential GTPase which binds GTP, GDP and possibly (p)ppGpp with moderate affinity, with high nucleotide exchange rates and a fairly low GTP hydrolysis rate. Plays a role in control of the cell cycle, stress response, ribosome biogenesis and in those bacteria that undergo differentiation, in morphogenesis control. The polypeptide is GTPase Obg (Chlamydia muridarum (strain MoPn / Nigg)).